Consider the following 360-residue polypeptide: U7 snRNA-associated Sm-like protein LSm11 (360 aa).

Positions 1-29 (MEERERGARSAGAGSPARPPSPRLDVSSD) are disordered. Residues serine 15 and serine 21 each carry the phosphoserine modification. Arginine 41 carries the post-translational modification Omega-N-methylarginine. A disordered region spans residues 68–143 (RGGGRGRGRA…PGRSRKAPRN (76 aa)). The segment covering 78–94 (RGAAAGSGVPAAPGPSG) has biased composition (low complexity). Lysine 120 participates in a covalent cross-link: Glycyl lysine isopeptide (Lys-Gly) (interchain with G-Cter in SUMO2). Serine 154 is subject to Phosphoserine. Residues 154 to 229 (SPLGELHRCI…LTLTRLFDRL (76 aa)) form the Sm domain. The tract at residues 171–204 (VHIRTFKGLRGVCTGFLVAFDKFWNMALTDVDET) is SM 1. The tract at residues 268 to 333 (ADTGRGSHKR…SRKKKRKPKV (66 aa)) is disordered. A Phosphoserine modification is found at serine 280. Over residues 299-322 (GRTTRTDGSSVGGTFSRATTLSRG) the composition is skewed to polar residues. The tract at residues 343–356 (INQIFIRGENVLLV) is SM 2.

It belongs to the snRNP Sm proteins family. Component of the heptameric ring U7 snRNP complex, or U7 Sm protein core complex, at least composed of LSM10, LSM11, SNRPB, SNRPD3, SNRPE, SNRPF, SNRPG and U7 snRNA. Formation of the U7 snRNP is an ATP-dependent process mediated by a specialized SMN complex containing at least the Sm protein core complex and additionally, the U7-specific LSM10 and LSM11 proteins. Identified in a histone pre-mRNA complex, at least composed of ERI1, LSM11, SLBP, SNRPB, SYNCRIP and YBX1. Interacts (via the Sm domains) with CLNS1A. Interacts with SMN and ZNF473. Interacts with PRMT5 and WDR77.

The protein localises to the nucleus. Its function is as follows. Component of the U7 snRNP complex that is involved in the histone 3'-end pre-mRNA processing. Increases U7 snRNA levels but not histone 3'-end pre-mRNA processing activity, when overexpressed. Required for cell cycle progression from G1 to S phases. Binds specifically to the Sm-binding site of U7 snRNA. The sequence is that of U7 snRNA-associated Sm-like protein LSm11 from Homo sapiens (Human).